The primary structure comprises 538 residues: tRNA-2-methylthio-N(6)-dimethylallyladenosine synthase (538 aa).

Residues 1-23 are disordered; it reads MNEEQRLGRNGNTDAVSTKEAGS. Positions 95–213 constitute an MTTase N-terminal domain; it reads KKFLVRTYGC…LPHLLRNALF (119 aa). 6 residues coordinate [4Fe-4S] cluster: Cys104, Cys140, Cys174, Cys250, Cys254, and Cys257. A Radical SAM core domain is found at 236 to 466; sequence REGKTQAWVN…NALVNDISAQ (231 aa). In terms of domain architecture, TRAM spans 469 to 532; it reads LEYQDKVVEV…TWSLNGEMVE (64 aa).

The protein belongs to the methylthiotransferase family. MiaB subfamily. As to quaternary structure, monomer. Requires [4Fe-4S] cluster as cofactor.

The protein resides in the cytoplasm. It catalyses the reaction N(6)-dimethylallyladenosine(37) in tRNA + (sulfur carrier)-SH + AH2 + 2 S-adenosyl-L-methionine = 2-methylsulfanyl-N(6)-dimethylallyladenosine(37) in tRNA + (sulfur carrier)-H + 5'-deoxyadenosine + L-methionine + A + S-adenosyl-L-homocysteine + 2 H(+). Catalyzes the methylthiolation of N6-(dimethylallyl)adenosine (i(6)A), leading to the formation of 2-methylthio-N6-(dimethylallyl)adenosine (ms(2)i(6)A) at position 37 in tRNAs that read codons beginning with uridine. This Halalkalibacterium halodurans (strain ATCC BAA-125 / DSM 18197 / FERM 7344 / JCM 9153 / C-125) (Bacillus halodurans) protein is tRNA-2-methylthio-N(6)-dimethylallyladenosine synthase.